Here is a 404-residue protein sequence, read N- to C-terminus: S-adenosylmethionine synthase (404 aa).

ATP is bound at residue histidine 18. Mg(2+) is bound at residue aspartate 20. Residue glutamate 46 participates in K(+) binding. The L-methionine site is built by glutamate 59 and glutamine 102. Residues 102 to 112 (QSPDIAQGVDT) form a flexible loop region. ATP contacts are provided by residues 177 to 179 (DGK), 249 to 250 (KF), aspartate 258, 264 to 265 (RK), alanine 281, and lysine 285. Aspartate 258 contacts L-methionine. Residue lysine 289 coordinates L-methionine.

This sequence belongs to the AdoMet synthase family. Homotetramer; dimer of dimers. The cofactor is Mg(2+). K(+) is required as a cofactor.

The protein localises to the cytoplasm. The catalysed reaction is L-methionine + ATP + H2O = S-adenosyl-L-methionine + phosphate + diphosphate. Its pathway is amino-acid biosynthesis; S-adenosyl-L-methionine biosynthesis; S-adenosyl-L-methionine from L-methionine: step 1/1. Catalyzes the formation of S-adenosylmethionine (AdoMet) from methionine and ATP. The overall synthetic reaction is composed of two sequential steps, AdoMet formation and the subsequent tripolyphosphate hydrolysis which occurs prior to release of AdoMet from the enzyme. The protein is S-adenosylmethionine synthase of Nocardia farcinica (strain IFM 10152).